The chain runs to 160 residues: ATP synthase subunit b (160 aa).

The chain crosses the membrane as a helical span at residues 13–33 (VNLAIVIGVLVWFLRGFLGGI).

Belongs to the ATPase B chain family. F-type ATPases have 2 components, F(1) - the catalytic core - and F(0) - the membrane proton channel. F(1) has five subunits: alpha(3), beta(3), gamma(1), delta(1), epsilon(1). F(0) has four main subunits: a(1), b(1), b'(1) and c(10-14). The alpha and beta chains form an alternating ring which encloses part of the gamma chain. F(1) is attached to F(0) by a central stalk formed by the gamma and epsilon chains, while a peripheral stalk is formed by the delta, b and b' chains.

The protein localises to the cellular thylakoid membrane. In terms of biological role, f(1)F(0) ATP synthase produces ATP from ADP in the presence of a proton or sodium gradient. F-type ATPases consist of two structural domains, F(1) containing the extramembraneous catalytic core and F(0) containing the membrane proton channel, linked together by a central stalk and a peripheral stalk. During catalysis, ATP synthesis in the catalytic domain of F(1) is coupled via a rotary mechanism of the central stalk subunits to proton translocation. Its function is as follows. Component of the F(0) channel, it forms part of the peripheral stalk, linking F(1) to F(0). The protein is ATP synthase subunit b of Parasynechococcus marenigrum (strain WH8102).